The primary structure comprises 473 residues: Trigger factor (473 aa).

A PPIase FKBP-type domain is found at Gly174–Pro261. The disordered stretch occupies residues Ala442–Asn473. The segment covering Lys444–Ala453 has biased composition (low complexity). Residues Thr454–Val467 show a composition bias toward basic residues.

This sequence belongs to the FKBP-type PPIase family. Tig subfamily.

The protein localises to the cytoplasm. It catalyses the reaction [protein]-peptidylproline (omega=180) = [protein]-peptidylproline (omega=0). In terms of biological role, involved in protein export. Acts as a chaperone by maintaining the newly synthesized protein in an open conformation. Functions as a peptidyl-prolyl cis-trans isomerase. This is Trigger factor from Prochlorococcus marinus subsp. pastoris (strain CCMP1986 / NIES-2087 / MED4).